A 264-amino-acid chain; its full sequence is Agamous-like MADS-box protein AGL61 (264 aa).

The 61-residue stretch at I62–S122 folds into the MADS-box domain.

Interacts with PHE1/AGL37, PHE2/AGL38, AGL80 and AGL86. Forms a heterodimer with AGL80. Expressed exclusively in the central cell of the female gametophyte and in early endosperm.

The protein resides in the nucleus. In terms of biological role, probable transcription factor. Controls central cell differentiation during female gametophyte development. The chain is Agamous-like MADS-box protein AGL61 (AGL61) from Arabidopsis thaliana (Mouse-ear cress).